Consider the following 103-residue polypeptide: Serine rich endogenous peptide 9 (103 aa).

The first 25 residues, 1–25 (MENIFFSKLTQVFIVALLCIFIYRT), serve as a signal peptide directing secretion. Residues 54–103 (IYVKPPPLKSKDSNQKGKRGETYYKPNSEIGTGPSHSGHGGSSIEHVSSP) are disordered. Basic and acidic residues predominate over residues 62 to 75 (KSKDSNQKGKRGET). An SCOOP motif motif is present at residues 82–96 (EIGTGPSHSGHGGSS). Positions 84–103 (GTGPSHSGHGGSSIEHVSSP) are enriched in low complexity. The short motif at 88–90 (SHS) is the SxS motif essential for MIK2 binding element.

Belongs to the serine rich endogenous peptide (SCOOP) phytocytokine family. As to quaternary structure, interacts with MIK2 (via extracellular leucine-rich repeat domain); this interaction triggers the formation of complex between MIK2 and the BAK1/SERK3 and SERK4 coreceptors, and subsequent BAK1 activation by phosphorylation. Mostly expressed in seedlings shoots and roots, and, to a lower extent, in leaves, but barely in flowers.

The protein localises to the cell membrane. It localises to the secreted. Its subcellular location is the extracellular space. The protein resides in the apoplast. Its function is as follows. Brassicaceae-specific phytocytokine (plant endogenous peptide released into the apoplast) perceived by MIK2 in a BAK1/SERK3 and SERK4 coreceptors-dependent manner, that modulates various physiological and antimicrobial processes including growth prevention and reactive oxygen species (ROS) response regulation. This Arabidopsis thaliana (Mouse-ear cress) protein is Serine rich endogenous peptide 9.